Here is a 550-residue protein sequence, read N- to C-terminus: Glucose-6-phosphate isomerase 3 (550 aa).

The active-site Proton donor is E357. Residues H388 and K514 contribute to the active site.

This sequence belongs to the GPI family.

It localises to the cytoplasm. It carries out the reaction alpha-D-glucose 6-phosphate = beta-D-fructose 6-phosphate. It participates in carbohydrate biosynthesis; gluconeogenesis. The protein operates within carbohydrate degradation; glycolysis; D-glyceraldehyde 3-phosphate and glycerone phosphate from D-glucose: step 2/4. Functionally, catalyzes the reversible isomerization of glucose-6-phosphate to fructose-6-phosphate. This Rhodococcus jostii (strain RHA1) protein is Glucose-6-phosphate isomerase 3.